An 814-amino-acid polypeptide reads, in one-letter code: Putative E3 ubiquitin-protein ligase RF298 (814 aa).

Disordered stretches follow at residues 1–51, 221–301, and 411–441; these read MVEK…ASLT, SVSN…TKSA, and ALPA…STKP. The span at 221–231 shows a compositional bias: low complexity; the sequence is SVSNASKSSES. Over residues 289-301 the composition is skewed to polar residues; the sequence is SVSTASGEGTKSA. Over residues 423-435 the composition is skewed to basic and acidic residues; it reads SEKKSGSEPEEKP. Positions 506-710 form a coiled coil; it reads ELKALRKEKE…KLKSDSLKIA (205 aa). Residues 760–800 form an RING-type zinc finger; it reads CVMCLSEEMSVIFLPCAHQVLCSKCNQLHEKEAMEDCPSCR.

Belongs to the RING-type zinc finger family.

It catalyses the reaction S-ubiquitinyl-[E2 ubiquitin-conjugating enzyme]-L-cysteine + [acceptor protein]-L-lysine = [E2 ubiquitin-conjugating enzyme]-L-cysteine + N(6)-ubiquitinyl-[acceptor protein]-L-lysine.. The protein operates within protein modification; protein ubiquitination. In Arabidopsis thaliana (Mouse-ear cress), this protein is Putative E3 ubiquitin-protein ligase RF298 (RF298).